We begin with the raw amino-acid sequence, 222 residues long: Prolactin-3B1 (222 aa).

The N-terminal stretch at 1-31 is a signal peptide; that stretch reads MKLSLSQPCSFSGALLLLAVSNLLVWEKVTS. Intrachain disulfides connect cysteine 82–cysteine 197 and cysteine 214–cysteine 222.

Belongs to the somatotropin/prolactin family.

It is found in the secreted. The chain is Prolactin-3B1 (Prl3b1) from Mus musculus (Mouse).